The chain runs to 290 residues: Ribonuclease 3 (290 aa).

One can recognise an RNase III domain in the interval 20 to 145 (YSCFYRILGF…FIGAIYLDRG (126 aa)). A Mg(2+)-binding site is contributed by glutamate 62. Residue aspartate 66 is part of the active site. Asparagine 131 and glutamate 134 together coordinate Mg(2+). The active site involves glutamate 134. Positions 173 to 242 (NFKSKLIEWS…AQMTLKKIKG (70 aa)) constitute a DRBM domain. Residues 254–290 (KTQNNVPAEDTTPESETSLTAENQQIDEIISTEEISV) form a disordered region. The span at 267–279 (ESETSLTAENQQI) shows a compositional bias: polar residues.

Belongs to the ribonuclease III family. Homodimer. The cofactor is Mg(2+).

It is found in the cytoplasm. It catalyses the reaction Endonucleolytic cleavage to 5'-phosphomonoester.. Digests double-stranded RNA. Involved in the processing of primary rRNA transcript to yield the immediate precursors to the large and small rRNAs (23S and 16S). Processes some mRNAs, and tRNAs when they are encoded in the rRNA operon. Processes pre-crRNA and tracrRNA of type II CRISPR loci if present in the organism. The polypeptide is Ribonuclease 3 (Bacteroides fragilis (strain ATCC 25285 / DSM 2151 / CCUG 4856 / JCM 11019 / LMG 10263 / NCTC 9343 / Onslow / VPI 2553 / EN-2)).